Consider the following 141-residue polypeptide: MAVERTLSIIKPDAVAKNIIGEIYSRFERNGLKIVASRMVRLSQADAEGFYAVHRERPFFNDLVKFMISGPVMVQVLEGEDAIRKNRDLMGATDPRKAEKGTIRADFAESIDANAVHGSDAPETAAVEIAYFFPELNIYTR.

Positions 11, 59, 87, 93, 104, and 114 each coordinate ATP. The Pros-phosphohistidine intermediate role is filled by H117.

The protein belongs to the NDK family. As to quaternary structure, homotetramer. The cofactor is Mg(2+).

It is found in the cytoplasm. It carries out the reaction a 2'-deoxyribonucleoside 5'-diphosphate + ATP = a 2'-deoxyribonucleoside 5'-triphosphate + ADP. It catalyses the reaction a ribonucleoside 5'-diphosphate + ATP = a ribonucleoside 5'-triphosphate + ADP. Major role in the synthesis of nucleoside triphosphates other than ATP. The ATP gamma phosphate is transferred to the NDP beta phosphate via a ping-pong mechanism, using a phosphorylated active-site intermediate. The protein is Nucleoside diphosphate kinase of Nitrosospira multiformis (strain ATCC 25196 / NCIMB 11849 / C 71).